Reading from the N-terminus, the 168-residue chain is uncharacterized protein (168 aa).

A compositionally biased stretch (pro residues) spans methionine 1–asparagine 10. Disordered regions lie at residues methionine 1–glutamine 23 and glutamate 117–glutamine 143.

This is an uncharacterized protein from Homo sapiens (Human).